Reading from the N-terminus, the 326-residue chain is Alkanal monooxygenase beta chain (326 aa).

It belongs to the bacterial luciferase oxidoreductase family. Heterodimer of an alpha and a beta chain.

The enzyme catalyses a long-chain fatty aldehyde + FMNH2 + O2 = a long-chain fatty acid + hnu + FMN + H2O + 2 H(+). Its function is as follows. Light-emitting reaction in luminous bacteria. The specific role of the beta subunit is unknown, but it is absolutely required for bioluminescence activity. The polypeptide is Alkanal monooxygenase beta chain (luxB) (Photobacterium leiognathi).